The primary structure comprises 617 residues: Tetratricopeptide repeat protein 39B (617 aa).

TPR repeat units follow at residues 328–361 and 561–594; these read SLIL…QEEW and PFTL…YKDY.

Belongs to the TTC39 family.

Regulates high density lipoprotein (HDL) cholesterol metabolism by promoting the ubiquitination and degradation of the oxysterols receptors LXR (NR1H2 and NR1H3). The polypeptide is Tetratricopeptide repeat protein 39B (Ttc39b) (Rattus norvegicus (Rat)).